Consider the following 103-residue polypeptide: Co-chaperonin GroES (103 aa).

Belongs to the GroES chaperonin family. In terms of assembly, heptamer of 7 subunits arranged in a ring. Interacts with the chaperonin GroEL.

The protein resides in the cytoplasm. In terms of biological role, together with the chaperonin GroEL, plays an essential role in assisting protein folding. The GroEL-GroES system forms a nano-cage that allows encapsulation of the non-native substrate proteins and provides a physical environment optimized to promote and accelerate protein folding. GroES binds to the apical surface of the GroEL ring, thereby capping the opening of the GroEL channel. The sequence is that of Co-chaperonin GroES from Synechococcus sp. (strain WH7803).